The primary structure comprises 435 residues: UPF0597 protein AHA_4077 (435 aa).

Belongs to the UPF0597 family.

The chain is UPF0597 protein AHA_4077 from Aeromonas hydrophila subsp. hydrophila (strain ATCC 7966 / DSM 30187 / BCRC 13018 / CCUG 14551 / JCM 1027 / KCTC 2358 / NCIMB 9240 / NCTC 8049).